The primary structure comprises 54 residues: uncharacterized protein (54 aa).

Residues 1–54 are disordered; the sequence is MWTLKARKEHTGISGKPTARTDRHGSTRSGDSELQASARRFSRLPDRCGAQGVT.

This is an uncharacterized protein from Mycobacterium tuberculosis (strain ATCC 25618 / H37Rv).